Here is a 176-residue protein sequence, read N- to C-terminus: MLRSSQARSVVRSSQWATTARVHQLELPSGWKPSALGVAPWQQRQQRQLSVRSLDHLVITCHDMDKTIDFYTRLGMSVVQFGQGRKALEFGSQKINLHQKGKEFEPKALVPQPGSQDLCFVIHDSIADAQKHLQEHGIQVVEGPVKRTGAVGPILSIYVRDPDNNLIELSSYQDAK.

The 120-residue stretch at 53–172 folds into the VOC domain; the sequence is SLDHLVITCH…DNNLIELSSY (120 aa). Catalysis depends on Glu-168, which acts as the Proton donor/acceptor.

This sequence belongs to the glyoxalase I family.

Its pathway is secondary metabolite biosynthesis. Functionally, glyoxalase domain-containing protein; part of the gene cluster that mediates the biosynthesis of itaconic acid and 2-hydroxyparaconate. Cis-aconitate is secreted by the mitochondrial tricarboxylate transporter MTT1. In the cytosol cis-aconitate is converted into trans-aconitate via isomerization by the aconitate-delta-isomerase ADI1. Decarboxylation of trans-aconitate by the trans-aconitate decarboxylase TAD1 then leads then to the production of itaconic acid. The cytochrome P450 monooxygenase CYP3 further converts itaconate to 2-hydroxyparaconate via oxidation of the double bond, leading to a transient epoxide, which can subsequently be lactonized to produce 2-hydroxyparaconate. Secretion of itaconate and possibly 2-hydroxyparaconate into the medium is mediated by the major facilitator ITP1. The glyoxalase domain-containing protein RDO1 is not involved in the biosynthesis of itaconate and 2-hydroxyparaconate, however, it might play a role in the further conversion of 2-hydroxyparaconate to itatartarate. The polypeptide is Glyoxalase domain-containing protein RDO1 (Mycosarcoma maydis (Corn smut fungus)).